We begin with the raw amino-acid sequence, 332 residues long: DNA-directed RNA polymerase subunit alpha (332 aa).

The segment at 1 to 231 (MVREKVTVST…DLFIPFLHME (231 aa)) is alpha N-terminal domain (alpha-NTD). Residues 262-332 (LSLESLFIDQ…FALDLPKNLN (71 aa)) are alpha C-terminal domain (alpha-CTD).

This sequence belongs to the RNA polymerase alpha chain family. In terms of assembly, in plastids the minimal PEP RNA polymerase catalytic core is composed of four subunits: alpha, beta, beta', and beta''. When a (nuclear-encoded) sigma factor is associated with the core the holoenzyme is formed, which can initiate transcription.

Its subcellular location is the plastid. It carries out the reaction RNA(n) + a ribonucleoside 5'-triphosphate = RNA(n+1) + diphosphate. In terms of biological role, DNA-dependent RNA polymerase catalyzes the transcription of DNA into RNA using the four ribonucleoside triphosphates as substrates. This chain is DNA-directed RNA polymerase subunit alpha, found in Cuscuta japonica (Japanese dodder).